Reading from the N-terminus, the 154-residue chain is Protein-export protein SecB (154 aa).

This sequence belongs to the SecB family. In terms of assembly, homotetramer, a dimer of dimers. One homotetramer interacts with 1 SecA dimer.

It is found in the cytoplasm. One of the proteins required for the normal export of preproteins out of the cell cytoplasm. It is a molecular chaperone that binds to a subset of precursor proteins, maintaining them in a translocation-competent state. It also specifically binds to its receptor SecA. The polypeptide is Protein-export protein SecB (Buchnera aphidicola subsp. Schizaphis graminum (strain Sg)).